A 99-amino-acid chain; its full sequence is Monothiol glutaredoxin-S11 (99 aa).

The region spanning 1 to 99 (MDKVMRMSSE…LVPLVKPYLC (99 aa)) is the Glutaredoxin domain. Residue C21 coordinates [2Fe-2S] cluster.

The protein belongs to the glutaredoxin family. CC-type subfamily.

It localises to the cytoplasm. May only reduce GSH-thiol disulfides, but not protein disulfides. In Arabidopsis thaliana (Mouse-ear cress), this protein is Monothiol glutaredoxin-S11 (GRXS11).